We begin with the raw amino-acid sequence, 181 residues long: Oligoribonuclease (181 aa).

The 164-residue stretch at 8-171 folds into the Exonuclease domain; that stretch reads LIWIDLEMTG…QDIQESIAEL (164 aa). The active site involves Tyr-129.

This sequence belongs to the oligoribonuclease family.

It is found in the cytoplasm. 3'-to-5' exoribonuclease specific for small oligoribonucleotides. The protein is Oligoribonuclease of Shewanella putrefaciens (strain CN-32 / ATCC BAA-453).